The following is a 336-amino-acid chain: TBC1 domain family member 21 (336 aa).

The Rab-GAP TBC domain maps to 57–265 (GLHPFVRTEA…RLWEVLLTGK (209 aa)).

Interacts with ACTB. Interacts with ARMC12, TOMM20, DNAH7 and RAP1A. Interacts with RAB10. In terms of tissue distribution, expressed in round and elongated spermatids (at protein level). Expressed specifically in adult testis and very weakly in fetal brain.

The protein resides in the cytoplasmic vesicle. It is found in the secretory vesicle. Its subcellular location is the acrosome. The protein localises to the cytoplasm. It localises to the cytoskeleton. In terms of biological role, acts as a GTPase-activating protein for Rab family protein(s). Essential for the establishment of male fertility, and is required for both the production of normal sperm number and sperm function. Plays an important role in the formation of intact mitochondria, outer dense fibers and axoneme within the sperm tail. Essential for sperm mitochondrial sheath formation and for the interactions of ARMC12 with VDAC2 and VDAC3. May be involved in acrosome formation and cytoskeletal reorganization during spermiogenesis, possibly by regulating RAB3A activity. The protein is TBC1 domain family member 21 (TBC1D21) of Homo sapiens (Human).